Reading from the N-terminus, the 45-residue chain is Putative purine permease 9 (45 aa).

Not detected in seedlings, leaves, embryos or root and shoot meristems.

In Arabidopsis thaliana (Mouse-ear cress), this protein is Putative purine permease 9.